The sequence spans 315 residues: Putative HTH-type transcriptional regulatory protein PF1851 (315 aa).

Residues 131-189 enclose the HTH cro/C1-type domain; sequence LRELREKYGYSTTELAEMLGVSRKSVQRYEKGEGMVSIDVAIRLEEIFDEPLVKPIDIF. The H-T-H motif DNA-binding region spans 142–161; it reads TTELAEMLGVSRKSVQRYEK.

This Pyrococcus furiosus (strain ATCC 43587 / DSM 3638 / JCM 8422 / Vc1) protein is Putative HTH-type transcriptional regulatory protein PF1851.